Consider the following 209-residue polypeptide: Small ribosomal subunit protein uS4 (209 aa).

In terms of domain architecture, S4 RNA-binding spans 98-159; the sequence is RRLDSAVYRL…KSRKITRIND (62 aa).

The protein belongs to the universal ribosomal protein uS4 family. As to quaternary structure, part of the 30S ribosomal subunit. Contacts protein S5. The interaction surface between S4 and S5 is involved in control of translational fidelity.

In terms of biological role, one of the primary rRNA binding proteins, it binds directly to 16S rRNA where it nucleates assembly of the body of the 30S subunit. Its function is as follows. With S5 and S12 plays an important role in translational accuracy. This is Small ribosomal subunit protein uS4 from Syntrophotalea carbinolica (strain DSM 2380 / NBRC 103641 / GraBd1) (Pelobacter carbinolicus).